The following is a 551-amino-acid chain: Adenylyl cyclase-associated protein (551 aa).

Positions 34-55 (SGHKPLPNMHRPSRDSNSQTHN) are disordered. Phosphoserine is present on serine 92. At threonine 96 the chain carries Phosphothreonine. The segment covering 288-300 (SASKTQAPSSGDS) has biased composition (polar residues). Disordered regions lie at residues 288 to 333 (SASK…NKGD) and 348 to 395 (TSGL…PVKP). Over residues 305–315 (LPPPPPPPPPS) the composition is skewed to pro residues. A compositionally biased stretch (basic and acidic residues) spans 352–361 (RKVDKSEMTH). The C-CAP/cofactor C-like domain maps to 395-529 (PPRIELENTK…EEGDYAERAV (135 aa)).

It belongs to the CAP family.

In terms of biological role, the N-terminal domain binds to adenylyl cyclase, thereby enabling adenylyl cyclase to be activated by upstream regulatory signals, such as Ras. The C-terminal domain is required for normal cellular morphology and growth control. The polypeptide is Adenylyl cyclase-associated protein (cap1) (Schizosaccharomyces pombe (strain 972 / ATCC 24843) (Fission yeast)).